The sequence spans 828 residues: Cadherin-22 (828 aa).

A signal peptide spans 1-34 (MRPRPEGRGLRAGVALSPALLLLLLLPPPPTLLG). Over 36–624 (LWAAGTPSPS…AFVMAASLSP (589 aa)) the chain is Extracellular. Cadherin domains follow at residues 64 to 168 (WVWN…EPRF), 169 to 277 (LHGP…PPRF), 278 to 394 (PQKM…PPEF), 395 to 498 (RPPS…NPPE), and 499 to 616 (LATP…TTAF). N162 is a glycosylation site (N-linked (GlcNAc...) asparagine). N-linked (GlcNAc...) asparagine glycosylation is found at N466 and N612. A helical transmembrane segment spans residues 625-645 (GALIALLVCVLILVVLVLLIL). Over 646–828 (TLRRHHKSHL…HRGDDEAQAS (183 aa)) the chain is Cytoplasmic. The span at 702–719 (GGGSAGGGAGGGSGGGAG) shows a compositional bias: gly residues. The disordered stretch occupies residues 702–745 (GGGSAGGGAGGGSGGGAGSPPQAHLPSERHSLPQGPPSPEPDFS).

It localises to the cell membrane. Functionally, cadherins are calcium-dependent cell adhesion proteins. They preferentially interact with themselves in a homophilic manner in connecting cells; cadherins may thus contribute to the sorting of heterogeneous cell types. PB-cadherins may have a role in the morphological organization of pituitary gland and brain tissues. In Homo sapiens (Human), this protein is Cadherin-22 (CDH22).